The primary structure comprises 347 residues: NADH-quinone oxidoreductase subunit H (347 aa).

9 consecutive transmembrane segments (helical) span residues leucine 13 to leucine 33, proline 50 to phenylalanine 70, glycine 82 to isoleucine 102, valine 115 to glycine 135, isoleucine 161 to valine 181, phenylalanine 198 to leucine 218, phenylalanine 248 to valine 268, valine 286 to valine 306, and valine 325 to glycine 345.

It belongs to the complex I subunit 1 family. In terms of assembly, NDH-1 is composed of 14 different subunits. Subunits NuoA, H, J, K, L, M, N constitute the membrane sector of the complex.

The protein resides in the cell inner membrane. The catalysed reaction is a quinone + NADH + 5 H(+)(in) = a quinol + NAD(+) + 4 H(+)(out). NDH-1 shuttles electrons from NADH, via FMN and iron-sulfur (Fe-S) centers, to quinones in the respiratory chain. The immediate electron acceptor for the enzyme in this species is believed to be ubiquinone. Couples the redox reaction to proton translocation (for every two electrons transferred, four hydrogen ions are translocated across the cytoplasmic membrane), and thus conserves the redox energy in a proton gradient. This subunit may bind ubiquinone. In Brucella ovis (strain ATCC 25840 / 63/290 / NCTC 10512), this protein is NADH-quinone oxidoreductase subunit H.